Here is a 421-residue protein sequence, read N- to C-terminus: Histidine--tRNA ligase (421 aa).

Belongs to the class-II aminoacyl-tRNA synthetase family. In terms of assembly, homodimer.

The protein resides in the cytoplasm. The enzyme catalyses tRNA(His) + L-histidine + ATP = L-histidyl-tRNA(His) + AMP + diphosphate + H(+). In Coxiella burnetii (strain CbuG_Q212) (Coxiella burnetii (strain Q212)), this protein is Histidine--tRNA ligase.